A 380-amino-acid chain; its full sequence is Glycine betaine/carnitine/choline transport ATP-binding protein OpuCA (380 aa).

An ABC transporter domain is found at 2-236; that stretch reads LKLEQVSKVY…PANEFVEEFI (235 aa). 35 to 42 provides a ligand contact to ATP; that stretch reads GPSGCGKT. 2 consecutive CBS domains span residues 255 to 314 and 315 to 373; these read MNRT…VGDV and YRSD…WGDE.

The protein belongs to the ABC transporter superfamily. The complex is composed of two ATP-binding proteins (OpuCA), two transmembrane proteins (OpuCB and OpuCD) and a solute-binding protein (OpuCC).

With respect to regulation, binds cyclic di-AMP (c-di-AMP), which may regulate the transporter activity. In terms of biological role, involved in a high affinity multicomponent binding-protein-dependent transport system for glycine betaine, carnitine and choline; probably responsible for energy coupling to the transport system. This is Glycine betaine/carnitine/choline transport ATP-binding protein OpuCA (opuCA) from Bacillus subtilis (strain 168).